The chain runs to 422 residues: Glucose-1-phosphate adenylyltransferase 2 (422 aa).

Alpha-D-glucose 1-phosphate-binding positions include tyrosine 110, glycine 175, 190–191 (EK), and serine 208.

Belongs to the bacterial/plant glucose-1-phosphate adenylyltransferase family. As to quaternary structure, homotetramer.

It catalyses the reaction alpha-D-glucose 1-phosphate + ATP + H(+) = ADP-alpha-D-glucose + diphosphate. Its pathway is glycan biosynthesis; glycogen biosynthesis. In terms of biological role, involved in the biosynthesis of ADP-glucose, a building block required for the elongation reactions to produce glycogen. Catalyzes the reaction between ATP and alpha-D-glucose 1-phosphate (G1P) to produce pyrophosphate and ADP-Glc. In Alkalilimnicola ehrlichii (strain ATCC BAA-1101 / DSM 17681 / MLHE-1), this protein is Glucose-1-phosphate adenylyltransferase 2.